Reading from the N-terminus, the 202-residue chain is Coiled-coil domain-containing protein mdt-28 (202 aa).

Acidic residues-rich tracts occupy residues 1–15 (MFEE…EEQE) and 28–45 (EDID…DDEY). Residues 1 to 83 (MFEELDAEDG…NEDDEEPIEP (83 aa)) are disordered. A coiled-coil region spans residues 159 to 184 (IEEENLDEAIERQETIIAAAREMLNS).

Interacts with mdt-6 and mdt-30. In terms of tissue distribution, ubiquitously expressed in tissues including epidermal, intestinal, pharyngeal and uterine, and is also expressed in vulval muscle cells and gut granules.

It localises to the nucleus. Its subcellular location is the cytoplasm. Plays a role in normal growth and development. The polypeptide is Coiled-coil domain-containing protein mdt-28 (Caenorhabditis elegans).